The sequence spans 708 residues: Exocyst complex component 5 (708 aa).

An N-acetylalanine modification is found at Ala2. Positions 40–101 (KRLLEEFVNH…AFQHFQELDE (62 aa)) form a coiled coil. Thr122, Thr395, and Thr405 each carry phosphothreonine. Ser412 bears the Phosphoserine mark.

The protein belongs to the SEC10 family. The exocyst complex is composed of EXOC1, EXOC2, EXOC3, EXOC4, EXOC5, EXOC6, EXOC7 and EXOC8. Interacts with EXOC3L1.

It is found in the cytoplasm. The protein resides in the midbody. Component of the exocyst complex involved in the docking of exocytic vesicles with fusion sites on the plasma membrane. In Mus musculus (Mouse), this protein is Exocyst complex component 5 (Exoc5).